A 283-amino-acid polypeptide reads, in one-letter code: Formamidopyrimidine-DNA glycosylase (283 aa).

Catalysis depends on Pro2, which acts as the Schiff-base intermediate with DNA. Catalysis depends on Glu3, which acts as the Proton donor. Lys58 (proton donor; for beta-elimination activity) is an active-site residue. DNA is bound by residues His100, Arg119, and Arg162. An FPG-type zinc finger spans residues 247–283 (DVYGREGAPCKGEGCTGQIKRIVQSGRSSFYCAQCQR). The active-site Proton donor; for delta-elimination activity is Arg273.

Belongs to the FPG family. Monomer. Zn(2+) serves as cofactor.

It catalyses the reaction Hydrolysis of DNA containing ring-opened 7-methylguanine residues, releasing 2,6-diamino-4-hydroxy-5-(N-methyl)formamidopyrimidine.. The enzyme catalyses 2'-deoxyribonucleotide-(2'-deoxyribose 5'-phosphate)-2'-deoxyribonucleotide-DNA = a 3'-end 2'-deoxyribonucleotide-(2,3-dehydro-2,3-deoxyribose 5'-phosphate)-DNA + a 5'-end 5'-phospho-2'-deoxyribonucleoside-DNA + H(+). Its function is as follows. Involved in base excision repair of DNA damaged by oxidation or by mutagenic agents. Acts as a DNA glycosylase that recognizes and removes damaged bases. Has a preference for oxidized purines, such as 7,8-dihydro-8-oxoguanine (8-oxoG). Has AP (apurinic/apyrimidinic) lyase activity and introduces nicks in the DNA strand. Cleaves the DNA backbone by beta-delta elimination to generate a single-strand break at the site of the removed base with both 3'- and 5'-phosphates. The polypeptide is Formamidopyrimidine-DNA glycosylase (Roseobacter denitrificans (strain ATCC 33942 / OCh 114) (Erythrobacter sp. (strain OCh 114))).